The sequence spans 378 residues: Putative dioxygenase VC_1345 (378 aa).

Fe cation-binding residues include histidine 288, aspartate 294, and histidine 324.

It belongs to the homogentisate dioxygenase family. It depends on Fe cation as a cofactor.

This chain is Putative dioxygenase VC_1345, found in Vibrio cholerae serotype O1 (strain ATCC 39315 / El Tor Inaba N16961).